Consider the following 352-residue polypeptide: S-adenosylmethionine:tRNA ribosyltransferase-isomerase (352 aa).

This sequence belongs to the QueA family. As to quaternary structure, monomer.

The protein localises to the cytoplasm. It carries out the reaction 7-aminomethyl-7-carbaguanosine(34) in tRNA + S-adenosyl-L-methionine = epoxyqueuosine(34) in tRNA + adenine + L-methionine + 2 H(+). It participates in tRNA modification; tRNA-queuosine biosynthesis. Transfers and isomerizes the ribose moiety from AdoMet to the 7-aminomethyl group of 7-deazaguanine (preQ1-tRNA) to give epoxyqueuosine (oQ-tRNA). This chain is S-adenosylmethionine:tRNA ribosyltransferase-isomerase, found in Solibacter usitatus (strain Ellin6076).